Reading from the N-terminus, the 673-residue chain is UvrABC system protein B (673 aa).

The Helicase ATP-binding domain occupies 26–415 (EGLEDGLAHQ…GDVVDQVVRP (390 aa)). Residue 39-46 (GVTGSGKT) coordinates ATP. Positions 92 to 115 (YYDYYQPEAYVPSSDTFIEKDASV) match the Beta-hairpin motif. Residues 431 to 597 (QVDDLLSEIR…GLNKKVVDIL (167 aa)) form the Helicase C-terminal domain. Residues 608–627 (AKGRGKSRPIVEPDNVPMDM) form a disordered region. A UVR domain is found at 633–668 (QQKIHELEGLMMQHAQNLEFEEAAQIRDQLHQLREL).

Belongs to the UvrB family. As to quaternary structure, forms a heterotetramer with UvrA during the search for lesions. Interacts with UvrC in an incision complex.

It is found in the cytoplasm. Functionally, the UvrABC repair system catalyzes the recognition and processing of DNA lesions. A damage recognition complex composed of 2 UvrA and 2 UvrB subunits scans DNA for abnormalities. Upon binding of the UvrA(2)B(2) complex to a putative damaged site, the DNA wraps around one UvrB monomer. DNA wrap is dependent on ATP binding by UvrB and probably causes local melting of the DNA helix, facilitating insertion of UvrB beta-hairpin between the DNA strands. Then UvrB probes one DNA strand for the presence of a lesion. If a lesion is found the UvrA subunits dissociate and the UvrB-DNA preincision complex is formed. This complex is subsequently bound by UvrC and the second UvrB is released. If no lesion is found, the DNA wraps around the other UvrB subunit that will check the other stand for damage. The chain is UvrABC system protein B from Escherichia coli O6:H1 (strain CFT073 / ATCC 700928 / UPEC).